A 252-amino-acid chain; its full sequence is Cyclic di-GMP binding protein VCA0042 (252 aa).

Residues 1-11 (MNSRPAEKIDN) show a composition bias toward basic and acidic residues. Positions 1–24 (MNSRPAEKIDNNDGQTETPRSKTV) are disordered. Residues 12–24 (NDGQTETPRSKTV) are compositionally biased toward polar residues. The region spanning 134-233 (QLRKEPRFEL…EEGRNNAKNL (100 aa)) is the PilZ domain.

This sequence belongs to the YcgR family. In terms of assembly, dimer.

The protein localises to the bacterial flagellum basal body. Its function is as follows. May act as a flagellar brake, regulating swimming and swarming in a bis-(3'-5') cyclic diguanylic acid (c-di-GMP)-dependent manner. Increasing levels of c-di-GMP lead to decreased motility (Potential). Binds bis-(3'-5') cyclic diguanylic acid (c-di-GMP) with a dissociation constant of 170 nM in the presence of 10 mM KCl and with 100 nM in its absence. Binds 1 to 2 c-di-GMP per subunit. Only 1 c-di-GMP is seen in the wild-type crystal, while 2 are seen in the mutant. Depending on the concentration of K(+) stoichiometries of 1:1, 1.43:1 and 2:1 are determined by isothermal titration calorimetry. The sequence is that of Cyclic di-GMP binding protein VCA0042 from Vibrio cholerae serotype O1 (strain ATCC 39315 / El Tor Inaba N16961).